Here is a 483-residue protein sequence, read N- to C-terminus: Spore germination protein B1 (483 aa).

5 consecutive transmembrane segments (helical) span residues 289–309 (ILITIYLPGLYISLVSFHTGL), 323–343 (LNVPFPPFVEAFIMIFTIELI), 353–373 (PIGQTIGLIGGVVIGQAAVQA), 375–395 (IVSALMVIVVSVTALASFTVP), and 410–430 (VMISATALGMYGVIMVYLFVI).

Belongs to the GerABKA family.

The protein resides in the cell membrane. In terms of biological role, involved in the response to the germinative mixture of L-asparagine, glucose, fructose and potassium ions (AGFK). Cannot stimulate germination in the absence of gerD and gerK gene products (fructose and glucose receptors respectively). The polypeptide is Spore germination protein B1 (gerBA) (Bacillus subtilis (strain 168)).